A 284-amino-acid polypeptide reads, in one-letter code: Bifunctional protein FolD (284 aa).

166–168 (GAS) provides a ligand contact to NADP(+).

This sequence belongs to the tetrahydrofolate dehydrogenase/cyclohydrolase family. As to quaternary structure, homodimer.

The enzyme catalyses (6R)-5,10-methylene-5,6,7,8-tetrahydrofolate + NADP(+) = (6R)-5,10-methenyltetrahydrofolate + NADPH. It catalyses the reaction (6R)-5,10-methenyltetrahydrofolate + H2O = (6R)-10-formyltetrahydrofolate + H(+). Its pathway is one-carbon metabolism; tetrahydrofolate interconversion. In terms of biological role, catalyzes the oxidation of 5,10-methylenetetrahydrofolate to 5,10-methenyltetrahydrofolate and then the hydrolysis of 5,10-methenyltetrahydrofolate to 10-formyltetrahydrofolate. The protein is Bifunctional protein FolD of Legionella pneumophila subsp. pneumophila (strain Philadelphia 1 / ATCC 33152 / DSM 7513).